The primary structure comprises 204 residues: uncharacterized protein (204 aa).

Positions Met-1–Lys-10 are enriched in polar residues. 2 disordered regions span residues Met-1–Arg-20 and Asp-70–Glu-99. The region spanning Val-131–Met-204 is the SPOR domain.

This sequence to E.coli FtsN repeat regions.

This is an uncharacterized protein from Haemophilus influenzae (strain ATCC 51907 / DSM 11121 / KW20 / Rd).